A 102-amino-acid chain; its full sequence is Small ribosomal subunit protein uS10 (102 aa).

The protein belongs to the universal ribosomal protein uS10 family. As to quaternary structure, part of the 30S ribosomal subunit.

Functionally, involved in the binding of tRNA to the ribosomes. This is Small ribosomal subunit protein uS10 from Malacoplasma penetrans (strain HF-2) (Mycoplasma penetrans).